Consider the following 612-residue polypeptide: Cyclin-dependent kinase G1 (612 aa).

Residues 26-54 (SRDVYVRQSGRDDERRQIKRPSDHDLRRN) are compositionally biased toward basic and acidic residues. Disordered stretches follow at residues 26 to 60 (SRDV…RHRS) and 239 to 278 (CYSS…EDQD). The Protein kinase domain maps to 297–593 (FQKLNKINEG…VEDALNHGWF (297 aa)). Residues 303–311 (INEGTYGIV) and K326 each bind ATP. Residue Y308 is modified to Phosphotyrosine. The active-site Proton acceptor is the D426. At S453 the chain carries Phosphoserine. A Phosphothreonine modification is found at T459.

This sequence belongs to the protein kinase superfamily. Ser/Thr protein kinase family. Forms a complex with CYCL1-1. Associated with the spliceosome. Interacts with RS2Z33. In terms of tissue distribution, expressed in leaves and inflorescences. Lower levels of expression in roots and stems.

The protein localises to the nucleus speckle. It carries out the reaction L-seryl-[protein] + ATP = O-phospho-L-seryl-[protein] + ADP + H(+). It catalyses the reaction L-threonyl-[protein] + ATP = O-phospho-L-threonyl-[protein] + ADP + H(+). Cyclin-dependent kinase involved in pre-mRNA splicing. Required for the correct splicing of the sixth intron of CALS5 pre-mRNA. May stabilize the binding of U1 snRNP to this rare type of intron with a GC 5'SS. Involved in chromosome pairing and is required for the completion of synapsis in male meiocytes at high ambient temperatures. This chain is Cyclin-dependent kinase G1 (CDKG1), found in Arabidopsis thaliana (Mouse-ear cress).